Here is a 106-residue protein sequence, read N- to C-terminus: Diptericin A (106 aa).

The first 19 residues, 1-19 (MQFTIAVALLCCAIASTLA), serve as a signal peptide directing secretion. A propeptide spans 20 to 23 (YPMP) (removed by a dipeptidylpeptidase).

The protein belongs to the attacin/sarcotoxin-2 family.

The protein localises to the secreted. Functionally, antimicrobial peptide required to resist Gram-negative bacterial infections, regulated by Dredd. In Drosophila melanogaster (Fruit fly), this protein is Diptericin A.